The chain runs to 93 residues: Large ribosomal subunit protein uL23cz/uL23cy (93 aa).

Belongs to the universal ribosomal protein uL23 family. Part of the 50S ribosomal subunit.

It localises to the plastid. Its subcellular location is the chloroplast. Functionally, binds to 23S rRNA. In Atropa belladonna (Belladonna), this protein is Large ribosomal subunit protein uL23cz/uL23cy (rpl23-A).